The primary structure comprises 432 residues: Lipid-A-disaccharide synthase (432 aa).

A compositionally biased stretch (polar residues) spans 1-11; sequence MTGIGNQTSGI. Residues 1-35 form a disordered region; the sequence is MTGIGNQTSGIETGVHDRAPADGEPTALPISHSPL.

Belongs to the LpxB family.

The catalysed reaction is a lipid X + a UDP-2-N,3-O-bis[(3R)-3-hydroxyacyl]-alpha-D-glucosamine = a lipid A disaccharide + UDP + H(+). It participates in bacterial outer membrane biogenesis; LPS lipid A biosynthesis. Its function is as follows. Condensation of UDP-2,3-diacylglucosamine and 2,3-diacylglucosamine-1-phosphate to form lipid A disaccharide, a precursor of lipid A, a phosphorylated glycolipid that anchors the lipopolysaccharide to the outer membrane of the cell. The sequence is that of Lipid-A-disaccharide synthase from Xanthomonas oryzae pv. oryzae (strain MAFF 311018).